The primary structure comprises 901 residues: HTH-type transcriptional regulator MalT (901 aa).

Residue 39–46 (SPAGYGKT) coordinates ATP. Positions 829–894 (ELIRTSPLTQ…DAVQHAQQLL (66 aa)) constitute an HTH luxR-type domain. Residues 853 to 872 (NEQIAGELAVAATTIKTHIR) constitute a DNA-binding region (H-T-H motif).

This sequence belongs to the MalT family. Monomer in solution. Oligomerizes to an active state in the presence of the positive effectors ATP and maltotriose.

With respect to regulation, activated by ATP and maltotriose, which are both required for DNA binding. Positively regulates the transcription of the maltose regulon whose gene products are responsible for uptake and catabolism of malto-oligosaccharides. Specifically binds to the promoter region of its target genes, recognizing a short DNA motif called the MalT box. This chain is HTH-type transcriptional regulator MalT, found in Salmonella typhimurium (strain LT2 / SGSC1412 / ATCC 700720).